Reading from the N-terminus, the 486-residue chain is Protein nucleotidyltransferase YdiU (486 aa).

Residues Gly90, Gly92, Arg93, Lys113, Asp125, Gly126, Arg176, and Arg183 each contribute to the ATP site. Asp252 functions as the Proton acceptor in the catalytic mechanism. Mg(2+) contacts are provided by Asn253 and Asp262. Asp262 contributes to the ATP binding site.

This sequence belongs to the SELO family. Mg(2+) is required as a cofactor. Mn(2+) serves as cofactor.

The enzyme catalyses L-seryl-[protein] + ATP = 3-O-(5'-adenylyl)-L-seryl-[protein] + diphosphate. The catalysed reaction is L-threonyl-[protein] + ATP = 3-O-(5'-adenylyl)-L-threonyl-[protein] + diphosphate. It carries out the reaction L-tyrosyl-[protein] + ATP = O-(5'-adenylyl)-L-tyrosyl-[protein] + diphosphate. It catalyses the reaction L-histidyl-[protein] + UTP = N(tele)-(5'-uridylyl)-L-histidyl-[protein] + diphosphate. The enzyme catalyses L-seryl-[protein] + UTP = O-(5'-uridylyl)-L-seryl-[protein] + diphosphate. The catalysed reaction is L-tyrosyl-[protein] + UTP = O-(5'-uridylyl)-L-tyrosyl-[protein] + diphosphate. Functionally, nucleotidyltransferase involved in the post-translational modification of proteins. It can catalyze the addition of adenosine monophosphate (AMP) or uridine monophosphate (UMP) to a protein, resulting in modifications known as AMPylation and UMPylation. This chain is Protein nucleotidyltransferase YdiU, found in Pseudomonas putida (strain ATCC 47054 / DSM 6125 / CFBP 8728 / NCIMB 11950 / KT2440).